We begin with the raw amino-acid sequence, 1372 residues long: MAQQTFTGRKRVRKFFGHIKEVAEMPNLIEVQKASYDQFLMVDEPQGGRLDEGLQAVFRSVFPISDFSGTSMLEFVRYEFEQPKYDVDECRQRGMTFAAPLKVTLRLIVFDIDEETGAKSVKDIKEQDVYMGDIPLMTMNGTFIVNGTERVIVSQMHRSPGVFFDHDKGKTHSSGKLLFAARVIPYRGSWLDIEFDAKDIVYARIDRRRKIPVTSLMFALGLDGEAILSTFYKKILYKRTKEGWRVPFDANRFRGYSTINDLIDADTGKVVLEAGKKLTVRAARQLQEKGLKALRLSDEELVGNYLAEDLVNPKTGEIHAEAGEEITDKNMKALNEQGYKELPLLDIDHVNVGAYIRNTLSADKNMTREDALFDIYRVMRPGEPPTLDSAQAMFQSLFFDAERYDLSAVGRVKMNMRLDLDAPDTQRTLRKEDILSVIKTLVDLRDGKGEIDDIDHLGNRRVRSVGELMENQYRIGLLRMERAIKERMSSVDIDTVMPQDLINAKPAAAAVREFFGSSQLSQFMDQTNPLSEITHKRRLSALGPGGLTRERAGFEVRDVHPTHYGRICPIETPEGPNIGLINSLATFARVNKYGFVETPYRKVKDGRVTDEVVYLSAMEEGRYTVAQANVPLDPKGRFTEDLVVCRHAGEVLPVTPDKVDYMDVSPKQLVSVAAALIPFLENDDANRALMGSNMQRQAVPLVRAEAPFVGTGMEGVVARDSGAAIAARRSGVIDQIDATRVVIRATEDLDPTKSGVDIYRLMKYQRSNQSTCINQRPLVKVGDIVKKGDIIADGPSTDLGELALGRNVLVAFMPWNGYNFEDSILLSERIVKEDVFTSIHIEEFEVMARDTKLGPEEITRDIPNVSEEALKNLDEAGIVYIGAEVRAGDILVGKITPKGESPMTPEEKLLRAIFGEKASDVRDTSLRVPPGVQGTIVEVRVFNRHGVDKDERALAIEREEIERLAKDRDDEQAILDRNVYNRLAELLEGRQGIAGPKGFKKDTKITRAVLEEYPKSQWWLFASPNDKLMAEIEAMRKQYDESKKGLEQRFLDKVEKLQRGDELPPGVMKMVKVFVAVKRKIQPGDKMAGRHGNKGVVSKIVPIEDMPFLEDGTHADIVLNPLGVPSRMNVGQILETHLGWACAGLGKRIGQTVDAYLSKQDIKPLKETLKKVYGEDETIKSLNDNELIELGHNLSRGVPIATPVFDGAKEADIEEMLKLAGLDASGQSTVYDGRTGDPFDRKVTVGYIYMLKLHHLVDDKIHARSIGPYSLVTQQPLGGKAQFGGQRFGEMEVWALEAYGAAYTLQEMLTVKSDDVAGRTKVYEAIVRGDDTFEAGIPESFNVLVKEMRSLGLNVDLHNSKMGPAPTSEAAE.

The protein belongs to the RNA polymerase beta chain family. In terms of assembly, the RNAP catalytic core consists of 2 alpha, 1 beta, 1 beta' and 1 omega subunit. When a sigma factor is associated with the core the holoenzyme is formed, which can initiate transcription.

The catalysed reaction is RNA(n) + a ribonucleoside 5'-triphosphate = RNA(n+1) + diphosphate. Functionally, DNA-dependent RNA polymerase catalyzes the transcription of DNA into RNA using the four ribonucleoside triphosphates as substrates. The polypeptide is DNA-directed RNA polymerase subunit beta (Bradyrhizobium diazoefficiens (strain JCM 10833 / BCRC 13528 / IAM 13628 / NBRC 14792 / USDA 110)).